We begin with the raw amino-acid sequence, 300 residues long: Cation-efflux pump FieF (300 aa).

Helical transmembrane passes span 12–32 (AAIA…FAWW), 39–59 (ILAA…NLLV), 82–102 (AALA…LTGI), and 114–134 (PGVG…LVSF). Aspartate 45 and aspartate 49 together coordinate Zn(2+). The Zn(2+) site is built by histidine 153 and aspartate 157. 2 helical membrane-spanning segments follow: residues 156–176 (SDVM…YGWH) and 178–198 (ADAL…LRMG).

Belongs to the cation diffusion facilitator (CDF) transporter (TC 2.A.4) family. FieF subfamily. In terms of assembly, homodimer.

It localises to the cell inner membrane. The catalysed reaction is Zn(2+)(in) + H(+)(out) = Zn(2+)(out) + H(+)(in). The enzyme catalyses Cd(2+)(in) + H(+)(out) = Cd(2+)(out) + H(+)(in). It catalyses the reaction Fe(2+)(in) + H(+)(out) = Fe(2+)(out) + H(+)(in). In terms of biological role, divalent metal cation transporter which exports Zn(2+), Cd(2+) and possibly Fe(2+). May be involved in zinc and iron detoxification by efflux. The protein is Cation-efflux pump FieF of Escherichia coli O157:H7 (strain EC4115 / EHEC).